Reading from the N-terminus, the 152-residue chain is Transcriptional regulator MraZ (152 aa).

SpoVT-AbrB domains follow at residues 5-52 (ASAI…PFDE) and 81-124 (AHEC…DETA).

The protein belongs to the MraZ family. In terms of assembly, forms oligomers.

The protein resides in the cytoplasm. Its subcellular location is the nucleoid. This chain is Transcriptional regulator MraZ, found in Shewanella sediminis (strain HAW-EB3).